The sequence spans 780 residues: ATP-dependent 6-phosphofructokinase, liver type (780 aa).

Position 2 is an N-acetylalanine (Ala2). The tract at residues 2–390 (AAVDLEKLRA…NWNIYKLLAH (389 aa)) is N-terminal catalytic PFK domain 1. Residues Gly25, 88–89 (RC), and 118–121 (GDGS) contribute to the ATP site. Asp119 provides a ligand contact to Mg(2+). Substrate contacts are provided by residues 164–166 (SID), Arg201, 208–210 (MGR), Glu264, Arg292, and 298–301 (HVQR). Asp166 functions as the Proton acceptor in the catalytic mechanism. Phosphoserine is present on Ser377. The interdomain linker stretch occupies residues 391-400 (QKPPKEKSNF). Residues 401–780 (SLAILNVGAP…RRTLSMDKGF (380 aa)) form a C-terminal regulatory PFK domain 2 region. Beta-D-fructose 2,6-bisphosphate is bound by residues Arg470, 527–531 (TISNN), Arg565, 572–574 (MGG), and Glu628. Ser529 carries an O-linked (GlcNAc) serine glycan. Residue Tyr640 is modified to Phosphotyrosine. Residues Arg654, 660-663 (HLQQ), and Arg734 each bind beta-D-fructose 2,6-bisphosphate. Position 775 is a phosphoserine (Ser775).

It belongs to the phosphofructokinase type A (PFKA) family. ATP-dependent PFK group I subfamily. Eukaryotic two domain clade 'E' sub-subfamily. In terms of assembly, homo- and heterotetramers. Phosphofructokinase (PFK) enzyme functions as a tetramer composed of different combinations of 3 types of subunits, called PFKM (M), PFKL (L) and PFKP (P). The composition of the PFK tetramer differs according to the tissue type it is present in. The kinetic and regulatory properties of the tetrameric enzyme are dependent on the subunit composition, hence can vary across tissues. Mg(2+) serves as cofactor. GlcNAcylation at Ser-529 by OGT decreases enzyme activity, leading to redirect glucose flux through the oxidative pentose phosphate pathway. Glycosylation is stimulated by both hypoxia and glucose deprivation.

It is found in the cytoplasm. It carries out the reaction beta-D-fructose 6-phosphate + ATP = beta-D-fructose 1,6-bisphosphate + ADP + H(+). Its pathway is carbohydrate degradation; glycolysis; D-glyceraldehyde 3-phosphate and glycerone phosphate from D-glucose: step 3/4. Its activity is regulated as follows. Allosterically activated by ADP, AMP, or fructose 2,6-bisphosphate, and allosterically inhibited by ATP or citrate. GlcNAcylation by OGT overcomes allosteric regulation. Its function is as follows. Catalyzes the phosphorylation of D-fructose 6-phosphate to fructose 1,6-bisphosphate by ATP, the first committing step of glycolysis. Negatively regulates the phagocyte oxidative burst in response to bacterial infection by controlling cellular NADPH biosynthesis and NADPH oxidase-derived reactive oxygen species. Upon macrophage activation, drives the metabolic switch toward glycolysis, thus preventing glucose turnover that produces NADPH via pentose phosphate pathway. This is ATP-dependent 6-phosphofructokinase, liver type (PFKL) from Pongo abelii (Sumatran orangutan).